A 212-amino-acid polypeptide reads, in one-letter code: MIIAIDGPAASGKGTLAKRLAAHYGFRYLDTGVIYRAVAKAMLDAGADLTDEARAAEVARTLDPSRFDDPALKSHAVGEAASVVSAHPQVRAALVEFQKTFAAAPPGAVLDGRDIGTVICPDAEVKIFVVASPEVRAHRRFLEAQSRGEPADEAVILSDIVKRDERDKNRSAAPLKQAPDAVLLDNSYLDIEGGVRAAIDIVEAVRAGRRRV.

ATP is bound at residue 7 to 15 (GPAASGKGT).

It belongs to the cytidylate kinase family. Type 1 subfamily.

It is found in the cytoplasm. The catalysed reaction is CMP + ATP = CDP + ADP. It catalyses the reaction dCMP + ATP = dCDP + ADP. The polypeptide is Cytidylate kinase (Rhodopseudomonas palustris (strain ATCC BAA-98 / CGA009)).